Here is a 374-residue protein sequence, read N- to C-terminus: Tuliposide A-converting enzyme b2, amyloplastic (374 aa).

An amyloplast-targeting transit peptide spans 1-68 (MSVALFCGPP…TNSSLSPSPT (68 aa)). Ser-226 (acyl-ester intermediate) is an active-site residue. Catalysis depends on charge relay system residues Asp-316 and His-348.

It belongs to the AB hydrolase superfamily. Homodimer. Highly expressed in pistil and bulb scales. Lower expression in stem, and barely detected in root, leaf, petal and stamen.

The protein localises to the plastid. The protein resides in the amyloplast. It catalyses the reaction 6-tuliposide A = tulipalin A + D-glucose. Its function is as follows. Lactone-forming carboxylesterases, specifically catalyzing intramolecular transesterification, but not hydrolysis. Involved in the biosynthesis of tulipalins, defensive chemicals that show antimicrobial activities against a broad range of strains of bacteria and fungi. Substrates are 6-tuliposide A &gt; 6-tuliposide B. This chain is Tuliposide A-converting enzyme b2, amyloplastic (TCEA-B2), found in Tulipa gesneriana (Garden tulip).